Consider the following 117-residue polypeptide: G antigen 12I (117 aa).

The interval 1 to 117 (MSWRGRSTYY…PEEGEKQSQC (117 aa)) is disordered. 2 stretches are compositionally biased toward acidic residues: residues 32-45 (FSDEVEPATPEEGE) and 87-96 (ECEDGPDGQE). Residues 103–117 (EEVKTPEEGEKQSQC) are compositionally biased toward basic and acidic residues.

Belongs to the GAGE family. As to quaternary structure, forms tetramers.

This Homo sapiens (Human) protein is G antigen 12I (GAGE12I).